Here is a 170-residue protein sequence, read N- to C-terminus: Acireductone dioxygenase (170 aa).

4 residues coordinate Fe(2+): H99, H101, E105, and H144. The Ni(2+) site is built by H99, H101, E105, and H144.

It belongs to the acireductone dioxygenase (ARD) family. In terms of assembly, monomer. Requires Fe(2+) as cofactor. Ni(2+) serves as cofactor.

The enzyme catalyses 1,2-dihydroxy-5-(methylsulfanyl)pent-1-en-3-one + O2 = 3-(methylsulfanyl)propanoate + CO + formate + 2 H(+). It carries out the reaction 1,2-dihydroxy-5-(methylsulfanyl)pent-1-en-3-one + O2 = 4-methylsulfanyl-2-oxobutanoate + formate + 2 H(+). It functions in the pathway amino-acid biosynthesis; L-methionine biosynthesis via salvage pathway; L-methionine from S-methyl-5-thio-alpha-D-ribose 1-phosphate: step 5/6. Functionally, catalyzes 2 different reactions between oxygen and the acireductone 1,2-dihydroxy-3-keto-5-methylthiopentene (DHK-MTPene) depending upon the metal bound in the active site. Fe-containing acireductone dioxygenase (Fe-ARD) produces formate and 2-keto-4-methylthiobutyrate (KMTB), the alpha-ketoacid precursor of methionine in the methionine recycle pathway. Ni-containing acireductone dioxygenase (Ni-ARD) produces methylthiopropionate, carbon monoxide and formate, and does not lie on the methionine recycle pathway. The sequence is that of Acireductone dioxygenase from Bacillus cereus (strain ZK / E33L).